We begin with the raw amino-acid sequence, 313 residues long: Ribosomal protein L11 methyltransferase (313 aa).

Residues Thr-164, Gly-185, Asp-207, and Asn-249 each coordinate S-adenosyl-L-methionine.

This sequence belongs to the methyltransferase superfamily. PrmA family.

Its subcellular location is the cytoplasm. The enzyme catalyses L-lysyl-[protein] + 3 S-adenosyl-L-methionine = N(6),N(6),N(6)-trimethyl-L-lysyl-[protein] + 3 S-adenosyl-L-homocysteine + 3 H(+). Functionally, methylates ribosomal protein L11. The protein is Ribosomal protein L11 methyltransferase of Clostridium botulinum (strain Eklund 17B / Type B).